The primary structure comprises 449 residues: Tubulin alpha-1B chain (449 aa).

Position 11 (Gln-11) interacts with GTP. Lys-40 carries the N6-acetyllysine modification. Glu-71, Ser-140, Gly-144, Thr-145, Thr-179, Asn-206, and Asn-228 together coordinate GTP. A Mg(2+)-binding site is contributed by Glu-71. The active site involves Glu-254.

The protein belongs to the tubulin family. As to quaternary structure, dimer of alpha and beta chains. A typical microtubule is a hollow water-filled tube with an outer diameter of 25 nm and an inner diameter of 15 nM. Alpha-beta heterodimers associate head-to-tail to form protofilaments running lengthwise along the microtubule wall with the beta-tubulin subunit facing the microtubule plus end conferring a structural polarity. Microtubules usually have 13 protofilaments but different protofilament numbers can be found in some organisms and specialized cells. Requires Mg(2+) as cofactor. In terms of processing, acetylation of alpha chains at Lys-40 stabilizes microtubules and affects affinity and processivity of microtubule motors. This modification has a role in multiple cellular functions, ranging from cell motility, cell cycle progression or cell differentiation to intracellular trafficking and signaling.

It localises to the cytoplasm. Its subcellular location is the cytoskeleton. The protein resides in the spindle. It is found in the nucleus. It catalyses the reaction GTP + H2O = GDP + phosphate + H(+). Its function is as follows. Tubulin is the major constituent of microtubules, a cylinder consisting of laterally associated linear protofilaments composed of alpha- and beta-tubulin heterodimers. Microtubules grow by the addition of GTP-tubulin dimers to the microtubule end, where a stabilizing cap forms. Below the cap, tubulin dimers are in GDP-bound state, owing to GTPase activity of alpha-tubulin. This chain is Tubulin alpha-1B chain (ALTBN), found in Physarum polycephalum (Slime mold).